The following is a 281-amino-acid chain: uncharacterized protein (281 aa).

3 helical membrane-spanning segments follow: residues 23–45 (LLLS…FFAA), 65–87 (IANF…ASLG), and 94–116 (TSVI…GSLS).

It belongs to the MscS (TC 1.A.23) family.

It localises to the cell membrane. This is an uncharacterized protein from Buchnera aphidicola subsp. Baizongia pistaciae (strain Bp).